The chain runs to 137 residues: uncharacterized protein (137 aa).

Residues 111–131 (LAVGVLVGSNLVVGSLVFALL) form a helical membrane-spanning segment.

The protein resides in the membrane. This is an uncharacterized protein from Saccharomyces cerevisiae (strain ATCC 204508 / S288c) (Baker's yeast).